A 584-amino-acid chain; its full sequence is MSKEECPKAADNSFSSDKHAQLILAQMNKMRSGQHFCDVQLQVGKETFQVHRLVLAASSPYFAALFTGGMKESSKDVVQILGVEAGIFQLLLDFIYTGVVNIAVTNVQELIVAADMLQLTEVVNLCCDFLKGQIDPQNCIGLFQFSEQIACHDLLEFTENYIHVHFLEVHTGEEFLGLTKDQLIKILRSEELSIEDEYQVFLAAMQWILKDLGKRRKHVVEVLDPVRFPLLPSQRLLKYIEGVSDFNLRVALQTLLKEYCEVCKSPKENKFCSFLQTSKVRPRKKARKYLYAVGGYTRLQGGRWSDSRALSCVERFDTFSQYWTTVSSLHQARCGLGVAVVGGMVYAIGGEKDSMIFDCTECYDPVTKQWTTVASMNHPRCGLGVCVCYGAIYALGGWVGAEIGNTIERFDPDENKWEVVGSMAVSRYYFGCCEMQGLIYAVGGISNEGLELRSFEVYDPLSKRWSPLPPMGTRRAYLGVAALNDCIYAIGGWNETQDALHTVEKYSFEEEKWVEVASMKVPRAGMCAVTVNGLLYVSGGRSSSHDFLAPGTLDSVEVYNPHSDTWTEIGNMITSRCEGGVAVL.

A BTB domain is found at 37-104; sequence CDVQLQVGKE…IYTGVVNIAV (68 aa). 6 Kelch repeats span residues 296–343, 344–390, 391–437, 439–485, 487–533, and 535–583; these read YTRL…VVGG, MVYA…VCYG, AIYA…EMQG, IYAV…ALND, IYAI…TVNG, and LYVS…GVAV.

In terms of tissue distribution, expression seems confined to tissues derived from trophectoderm and primitive endoderm.

The protein resides in the cytoplasm. It localises to the cytoskeleton. May play a role in organizing the actin cytoskeleton. This chain is Actin-binding protein IPP (Ipp), found in Mus musculus (Mouse).